A 392-amino-acid polypeptide reads, in one-letter code: p21-activated protein kinase-interacting protein 1 (392 aa).

WD repeat units follow at residues 33-72, 73-113, 114-155, 156-195, 196-235, and 236-275; these read VADFTHHAHTASLSAVAVNSRFVVTGSKDETIHIYDMKKK, IEHG…AKKW, ECLK…LVEG, RSAFIKNIKQNAHIVEWSPRGEQYVVIIQNKIDIYQLDTA, SISGTITNEKRISSVKFLSESVLAVAGDEEVIRFFDCDSL, and VCLCEFKAHENRVKDMFSFEIPEHHVIVSASSDGFIKMWK. The tract at residues 312–392 is disordered; sequence SLPPAAEPSP…RKKKKIKTMQ (81 aa). The residue at position 320 (S320) is a Phosphoserine. Positions 325–345 are enriched in basic and acidic residues; that stretch reads EQSKIGKKEPGDTVHKEEKRS. Residues 381 to 392 show a composition bias toward basic residues; sequence KKRKKKKIKTMQ.

In terms of assembly, interacts with PAK1. In terms of tissue distribution, expressed in brain, colon, heart, kidney, liver, lung, muscle, peripheral blood leukocytes, placenta, small intestine, spleen and thymus.

It localises to the nucleus. The protein localises to the nucleolus. Negatively regulates the PAK1 kinase. PAK1 is a member of the PAK kinase family, which has been shown to play a positive role in the regulation of signaling pathways involving MAPK8 and RELA. PAK1 exists as an inactive homodimer, which is activated by binding of small GTPases such as CDC42 to an N-terminal regulatory domain. PAK1IP1 also binds to the N-terminus of PAK1, and inhibits the specific activation of PAK1 by CDC42. May be involved in ribosomal large subunit assembly. In Homo sapiens (Human), this protein is p21-activated protein kinase-interacting protein 1 (PAK1IP1).